The chain runs to 191 residues: Phosphoheptose isomerase (191 aa).

An SIS domain is found at 37–191 (ITSSLKQGGK…LILLIEQSLL (155 aa)). 52–54 (NGG) contacts substrate. Residues histidine 61 and glutamate 65 each contribute to the Zn(2+) site. Residues glutamate 65, 93–94 (ND), 119–121 (STS), serine 124, and glutamine 172 contribute to the substrate site. Zn(2+)-binding residues include glutamine 172 and histidine 180.

Belongs to the SIS family. GmhA subfamily. Requires Zn(2+) as cofactor.

The protein resides in the cytoplasm. It catalyses the reaction 2 D-sedoheptulose 7-phosphate = D-glycero-alpha-D-manno-heptose 7-phosphate + D-glycero-beta-D-manno-heptose 7-phosphate. It functions in the pathway carbohydrate biosynthesis; D-glycero-D-manno-heptose 7-phosphate biosynthesis; D-glycero-alpha-D-manno-heptose 7-phosphate and D-glycero-beta-D-manno-heptose 7-phosphate from sedoheptulose 7-phosphate: step 1/1. Functionally, catalyzes the isomerization of sedoheptulose 7-phosphate in D-glycero-D-manno-heptose 7-phosphate. This chain is Phosphoheptose isomerase, found in Cytophaga hutchinsonii (strain ATCC 33406 / DSM 1761 / CIP 103989 / NBRC 15051 / NCIMB 9469 / D465).